We begin with the raw amino-acid sequence, 205 residues long: Ribonuclease HII (205 aa).

The region spanning 1–203 (MKAGIDEAGK…VSNLRQKTLD (203 aa)) is the RNase H type-2 domain. A divalent metal cation is bound by residues Asp-6 and Glu-7. Residue Arg-46 coordinates substrate. Asp-101 contributes to the a divalent metal cation binding site. Substrate contacts are provided by Lys-143, Arg-146, and Tyr-164.

Belongs to the RNase HII family. It depends on Mn(2+) as a cofactor. Mg(2+) is required as a cofactor.

It localises to the cytoplasm. The enzyme catalyses Endonucleolytic cleavage to 5'-phosphomonoester.. Its function is as follows. Endonuclease that specifically degrades the RNA of RNA-DNA hybrids. The chain is Ribonuclease HII (rnhB) from Archaeoglobus fulgidus (strain ATCC 49558 / DSM 4304 / JCM 9628 / NBRC 100126 / VC-16).